Here is a 354-residue protein sequence, read N- to C-terminus: Transcription activator of gluconeogenesis ERT1-1 (354 aa).

The segment at 1–29 (MSFYPILRGPAKQESPPPPPAPKKRRKTA) is disordered. The segment at residues 32–60 (CLHCQKAHLTCDEGRPCARCIKKNMGDQC) is a DNA-binding region (zn(2)-C6 fungal-type). Disordered stretches follow at residues 71 to 111 (LVGL…FGSS) and 128 to 169 (DTSS…QGSP). Over residues 81–98 (QATQQKQQQQQQQQQAVQ) the composition is skewed to low complexity. The span at 159-169 (SQTAGTPQGSP) shows a compositional bias: polar residues.

The protein belongs to the ERT1/acuK family.

Its subcellular location is the nucleus. Transcription factor which regulates nonfermentable carbon utilization. Activator of gluconeogenetic genes. In Yarrowia lipolytica (strain CLIB 122 / E 150) (Yeast), this protein is Transcription activator of gluconeogenesis ERT1-1 (ERT1-1).